We begin with the raw amino-acid sequence, 458 residues long: Bifunctional protein GlmU (458 aa).

A pyrophosphorylase region spans residues 1-229 (MTNYAIILAA…FNESLGVNDR (229 aa)). Residues 8-11 (LAAG), K22, Q72, and 77-78 (GT) contribute to the UDP-N-acetyl-alpha-D-glucosamine site. Residue D102 coordinates Mg(2+). UDP-N-acetyl-alpha-D-glucosamine-binding residues include G139, E154, N169, and N227. Residue N227 participates in Mg(2+) binding. Positions 230–250 (VALATAESVMRRRINKAHMIN) are linker. Positions 251-458 (GVTFQNPDAT…AKRLPHYPQK (208 aa)) are N-acetyltransferase. UDP-N-acetyl-alpha-D-glucosamine-binding residues include R332 and K350. H362 (proton acceptor) is an active-site residue. The UDP-N-acetyl-alpha-D-glucosamine site is built by Y365 and N376. Acetyl-CoA-binding positions include A379, 385 to 386 (NY), S404, A422, and R439.

This sequence in the N-terminal section; belongs to the N-acetylglucosamine-1-phosphate uridyltransferase family. In the C-terminal section; belongs to the transferase hexapeptide repeat family. As to quaternary structure, homotrimer. Mg(2+) serves as cofactor.

The protein localises to the cytoplasm. The catalysed reaction is alpha-D-glucosamine 1-phosphate + acetyl-CoA = N-acetyl-alpha-D-glucosamine 1-phosphate + CoA + H(+). The enzyme catalyses N-acetyl-alpha-D-glucosamine 1-phosphate + UTP + H(+) = UDP-N-acetyl-alpha-D-glucosamine + diphosphate. It functions in the pathway nucleotide-sugar biosynthesis; UDP-N-acetyl-alpha-D-glucosamine biosynthesis; N-acetyl-alpha-D-glucosamine 1-phosphate from alpha-D-glucosamine 6-phosphate (route II): step 2/2. The protein operates within nucleotide-sugar biosynthesis; UDP-N-acetyl-alpha-D-glucosamine biosynthesis; UDP-N-acetyl-alpha-D-glucosamine from N-acetyl-alpha-D-glucosamine 1-phosphate: step 1/1. It participates in bacterial outer membrane biogenesis; LPS lipid A biosynthesis. In terms of biological role, catalyzes the last two sequential reactions in the de novo biosynthetic pathway for UDP-N-acetylglucosamine (UDP-GlcNAc). The C-terminal domain catalyzes the transfer of acetyl group from acetyl coenzyme A to glucosamine-1-phosphate (GlcN-1-P) to produce N-acetylglucosamine-1-phosphate (GlcNAc-1-P), which is converted into UDP-GlcNAc by the transfer of uridine 5-monophosphate (from uridine 5-triphosphate), a reaction catalyzed by the N-terminal domain. This is Bifunctional protein GlmU from Streptococcus uberis (strain ATCC BAA-854 / 0140J).